A 401-amino-acid chain; its full sequence is Lipid-A-disaccharide synthase (401 aa).

This sequence belongs to the LpxB family.

It catalyses the reaction a lipid X + a UDP-2-N,3-O-bis[(3R)-3-hydroxyacyl]-alpha-D-glucosamine = a lipid A disaccharide + UDP + H(+). Its pathway is bacterial outer membrane biogenesis; LPS lipid A biosynthesis. Functionally, condensation of UDP-2,3-diacylglucosamine and 2,3-diacylglucosamine-1-phosphate to form lipid A disaccharide, a precursor of lipid A, a phosphorylated glycolipid that anchors the lipopolysaccharide to the outer membrane of the cell. This chain is Lipid-A-disaccharide synthase, found in Ruegeria pomeroyi (strain ATCC 700808 / DSM 15171 / DSS-3) (Silicibacter pomeroyi).